The sequence spans 292 residues: Ribosomal RNA small subunit methyltransferase A (292 aa).

S-adenosyl-L-methionine-binding residues include asparagine 28, leucine 30, glycine 55, glutamate 76, aspartate 101, and asparagine 126.

This sequence belongs to the class I-like SAM-binding methyltransferase superfamily. rRNA adenine N(6)-methyltransferase family. RsmA subfamily.

The protein resides in the cytoplasm. The catalysed reaction is adenosine(1518)/adenosine(1519) in 16S rRNA + 4 S-adenosyl-L-methionine = N(6)-dimethyladenosine(1518)/N(6)-dimethyladenosine(1519) in 16S rRNA + 4 S-adenosyl-L-homocysteine + 4 H(+). In terms of biological role, specifically dimethylates two adjacent adenosines (A1518 and A1519) in the loop of a conserved hairpin near the 3'-end of 16S rRNA in the 30S particle. May play a critical role in biogenesis of 30S subunits. The chain is Ribosomal RNA small subunit methyltransferase A from Bacillus cereus (strain G9842).